The following is a 282-amino-acid chain: Undecaprenyl-diphosphatase (282 aa).

7 helical membrane passes run 45–65 (AFMEMFNVVIQLGAILAVVFI), 86–106 (WQLWAKVVVASLPAVIIGIPL), 114–134 (FHNFVSVAIMLIIYGIAFILI), 151–171 (LPYKTALYIGFFQVLSLFPGT), 196–216 (FFLGIPVMFGASGIKVLKFIL), 224–244 (GQLTLLLVAMIVAFGVSMYVI), and 256–276 (FTVFGKYRIGLGALLLIYWVF).

This sequence belongs to the UppP family.

It localises to the cell membrane. It catalyses the reaction di-trans,octa-cis-undecaprenyl diphosphate + H2O = di-trans,octa-cis-undecaprenyl phosphate + phosphate + H(+). In terms of biological role, catalyzes the dephosphorylation of undecaprenyl diphosphate (UPP). Confers resistance to bacitracin. This chain is Undecaprenyl-diphosphatase, found in Streptococcus gordonii (strain Challis / ATCC 35105 / BCRC 15272 / CH1 / DL1 / V288).